Consider the following 607-residue polypeptide: Guanine nucleotide-binding protein-like 1 (607 aa).

Residues 1 to 14 show a composition bias toward basic residues; it reads MPRKKPFSVKQKKK. Residues 1 to 81 form a disordered region; that stretch reads MPRKKPFSVK…GPRGYDPNRY (81 aa). Residues 15–26 are compositionally biased toward basic and acidic residues; sequence QLQDKRERKRGL. S32, S33, and S34 each carry phosphoserine. Residues T48 and T50 each carry the phosphothreonine modification. S51 and S68 each carry phosphoserine. The CP-type G domain occupies 178–418; the sequence is WRQLWRVLEM…LCDCPGLIFP (241 aa). 225–228 is a GTP binding site; sequence NKVD. S324 is subject to Phosphoserine. Residues 367–374 and 411–415 each bind GTP; these read GFPNVGKS and DCPGL. Residues 547–607 are disordered; sequence GPAGDEEEEE…PYALLGEDEC (61 aa). Acidic residues predominate over residues 550-584; it reads GDEEEEEEEELSSSCEEEGEEDRDADEEGEGDEET. S561, S562, and S563 each carry phosphoserine.

The protein belongs to the TRAFAC class YlqF/YawG GTPase family.

Functionally, possible regulatory or functional link with the histocompatibility cluster. This is Guanine nucleotide-binding protein-like 1 (GNL1) from Homo sapiens (Human).